A 238-amino-acid polypeptide reads, in one-letter code: Probable transcriptional regulatory protein llmg_0242 (238 aa).

The protein belongs to the TACO1 family. YeeN subfamily.

It is found in the cytoplasm. The sequence is that of Probable transcriptional regulatory protein llmg_0242 from Lactococcus lactis subsp. cremoris (strain MG1363).